We begin with the raw amino-acid sequence, 309 residues long: Neuropeptide-like 1 (309 aa).

An N-terminal signal peptide occupies residues 1 to 28 (MQAVLQSAHSSRRLMLLLSMLLNAAIQP). A propeptide spanning residues 29–99 (RSIIVSATDD…GEYPDYLEED (71 aa)) is cleaved from the precursor. Residues 126–147 (GQLPTAEPGEDYGDADSGEPSE) form a disordered region. Acidic residues predominate over residues 133-144 (PGEDYGDADSGE). Position 164 is a tyrosine amide (tyrosine 164). Asparagine 182 carries the asparagine amide modification.

In terms of tissue distribution, MTYamide peptide: Expressed in the larval CNS (at protein level). NAP peptide: Expressed in the larval CNS (at protein level). IPNamide peptide: Expressed in the ventral ganglion of the third larval instar and adult brain (at protein level).

The protein localises to the secreted. Acts as a ligand for the receptor-type guanylate cyclase Gyc76C. Stimulates Gyc76c-dependent cGMP production and modulates the IMD innate immune pathway in response to salt stress by inducing nuclear translocation of NF-kappa-B protein Rel which leads to increased expression of the antimicrobial peptide diptericin. Does not appear to play a role in Gyc76C-mediated wing development. The polypeptide is Neuropeptide-like 1 (Nplp1) (Drosophila melanogaster (Fruit fly)).